A 145-amino-acid chain; its full sequence is Male-specific protein scotti (145 aa).

Positions 1-34 (MANNRLMPEGQIIEEDMDGEDQNARELDIDDDDD) are disordered. Acidic residues predominate over residues 12–21 (IIEEDMDGED).

This sequence belongs to the male-specific scotti family.

Functionally, post-meiotically transcribed gene that has a role in late spermiogenesis; required for actin cone progression during spermatid individualization. The polypeptide is Male-specific protein scotti (Drosophila willistoni (Fruit fly)).